The sequence spans 609 residues: Protein alan shepard (609 aa).

Residues Met-1–Leu-12 show a composition bias toward pro residues. Residues Met-1 to Pro-96 form a disordered region. Tyr-5 carries the post-translational modification Phosphotyrosine. The segment covering His-13–Gln-35 has biased composition (low complexity). The span at Gly-37–Ala-50 shows a compositional bias: gly residues. 2 stretches are compositionally biased toward low complexity: residues Ala-51–Gln-68 and Ser-83–Ala-92. Phosphotyrosine occurs at positions 152 and 168. The segment at Pro-190 to Glu-252 is disordered. Residues Ser-204 to Glu-252 show a composition bias toward low complexity. RRM domains are found at residues Thr-257–Gln-330 and Thr-336–Gly-415. Residues Met-583–Lys-609 are disordered.

In terms of biological role, has a role in the perception of gravity. This Drosophila grimshawi (Hawaiian fruit fly) protein is Protein alan shepard.